The chain runs to 211 residues: Metalloproteinase inhibitor 3 (211 aa).

The signal sequence occupies residues 1–23 (MTPWLGLVVLLSCWSLGHWGTEA). Cys-24 serves as a coordination point for Zn(2+). 2 involved in metalloproteinase-binding regions span residues 24-27 (CTCS) and 88-89 (ES). Intrachain disulfides connect Cys-24-Cys-91, Cys-26-Cys-118, Cys-36-Cys-143, Cys-145-Cys-192, Cys-150-Cys-155, and Cys-163-Cys-184. Positions 24–143 (CTCSPSHPQD…GLNYRYHLGC (120 aa)) constitute an NTR domain. The mediates interaction with EFEMP1 stretch occupies residues 105-188 (TGRVYEGKMY…SKHYACIRQK (84 aa)).

The protein belongs to the protease inhibitor I35 (TIMP) family. In terms of assembly, interacts with EFEMP1. Interacts with KDR.

It is found in the secreted. Its subcellular location is the extracellular space. The protein resides in the extracellular matrix. Its function is as follows. Mediates a variety of processes including matrix regulation and turnover, inflammation, and angiogenesis, through reversible inhibition of zinc protease superfamily enzymes, primarily matrix metalloproteinases (MMPs). Regulates extracellular matrix (ECM) remodeling through inhibition of matrix metalloproteinases (MMP) including MMP-1, MMP-2, MMP-3, MMP-7, MMP-9, MMP-13, MMP-14 and MMP-15. Additionally, modulates the processing of amyloid precursor protein (APP) and apolipoprotein E receptor ApoER2 by inhibiting two alpha-secretases ADAM10 and ADAM17. Functions as a tumor suppressor and a potent inhibitor of angiogenesis. Exerts its anti-angiogenic effect by directly interacting with vascular endothelial growth factor (VEGF) receptor-2/KDR, preventing its binding to the VEGFA ligand. Selectively induces apoptosis in angiogenic endothelial cells through a caspase-independent cell death pathway. Mechanistically, inhibits matrix-induced focal adhesion kinase PTK2 tyrosine phosphorylation and association with paxillin/PXN and disrupts the incorporation of ITGB3, PTK2 and PXN into focal adhesion contacts on the matrix. The sequence is that of Metalloproteinase inhibitor 3 (Timp3) from Rattus norvegicus (Rat).